The primary structure comprises 601 residues: Glutathione-regulated potassium-efflux system protein KefB (601 aa).

13 helical membrane passes run 5-25, 29-49, 55-75, 87-107, 115-135, 152-172, 177-197, 207-227, 230-250, 261-281, 284-304, 326-346, and 356-376; these read DLLL…PLAA, IGAV…GLGF, EILH…GLEL, IFGV…GLLM, AAVI…LQLM, VLLF…LLAG, HFDW…LIGG, FIAA…LVLG, LFMD…GILL, IAID…VGMA, LGVL…LVAV, FAGV…TAAS, and ALLL…MKLI. The region spanning 400-518 is the RCK N-terminal domain; it reads KPQVIVVGFG…QAGVTNFSRE (119 aa).

This sequence belongs to the monovalent cation:proton antiporter 2 (CPA2) transporter (TC 2.A.37) family. KefB subfamily. As to quaternary structure, interacts with the regulatory subunit KefG.

The protein localises to the cell inner membrane. In terms of biological role, pore-forming subunit of a potassium efflux system that confers protection against electrophiles. Catalyzes K(+)/H(+) antiport. The protein is Glutathione-regulated potassium-efflux system protein KefB of Enterobacter sp. (strain 638).